The following is a 404-amino-acid chain: Activity-regulated cytoskeleton-associated protein (404 aa).

A coiled-coil region spans residues 51-78; it reads EVSKQVERELKGLQKSVGKLENNLEDHV. Positions 351-404 are disordered; it reads VQGNMDHSEEPSPQRTPEIQSGDSVESMPPSTTASPVPSNGTQPEPPSPPATVI. Over residues 363–393 the composition is skewed to polar residues; sequence PQRTPEIQSGDSVESMPPSTTASPVPSNGTQ. Pro residues predominate over residues 394-404; the sequence is PEPPSPPATVI.

Belongs to the ARC/ARG3.1 family. Homooligomer; homooligomerizes into virion-like capsids. Palmitoylation anchors the protein into the membrane by allowing direct insertion into the hydrophobic core of the lipid bilayer. Expressed at various levels throughout the brain.

Its subcellular location is the extracellular vesicle membrane. It localises to the postsynaptic cell membrane. The protein resides in the synapse. The protein localises to the postsynaptic density. It is found in the early endosome membrane. Its subcellular location is the cell projection. It localises to the dendrite. The protein resides in the cytoplasm. The protein localises to the cytoskeleton. It is found in the cell cortex. Its subcellular location is the dendritic spine. Master regulator of synaptic plasticity that self-assembles into virion-like capsids that encapsulate RNAs and mediate intercellular RNA transfer in the nervous system. ARC protein is released from neurons in extracellular vesicles that mediate the transfer of ARC mRNA into new target cells, where ARC mRNA can undergo activity-dependent translation. ARC capsids are endocytosed and are able to transfer ARC mRNA into the cytoplasm of neurons. Acts as a key regulator of synaptic plasticity: required for protein synthesis-dependent forms of long-term potentiation (LTP) and depression (LTD) and for the formation of long-term memory. Regulates synaptic plasticity by promoting endocytosis of AMPA receptors (AMPARs) in response to synaptic activity: this endocytic pathway maintains levels of surface AMPARs in response to chronic changes in neuronal activity through synaptic scaling, thereby contributing to neuronal homeostasis. Acts as a postsynaptic mediator of activity-dependent synapse elimination in the developing cerebellum by mediating elimination of surplus climbing fiber synapses. Accumulates at weaker synapses, probably to prevent their undesired enhancement. This suggests that ARC-containing virion-like capsids may be required to eliminate synaptic material. The sequence is that of Activity-regulated cytoskeleton-associated protein from Gallus gallus (Chicken).